We begin with the raw amino-acid sequence, 527 residues long: Peptide chain release factor 3 (527 aa).

The tr-type G domain occupies 9 to 278; sequence NKRRTFAIIS…GLTQWAPKPQ (270 aa). Residues 18–25, 86–90, and 140–143 each bind GTP; these read SHPDAGKT, DTPGH, and NKLD.

It belongs to the TRAFAC class translation factor GTPase superfamily. Classic translation factor GTPase family. PrfC subfamily.

It localises to the cytoplasm. Increases the formation of ribosomal termination complexes and stimulates activities of RF-1 and RF-2. It binds guanine nucleotides and has strong preference for UGA stop codons. It may interact directly with the ribosome. The stimulation of RF-1 and RF-2 is significantly reduced by GTP and GDP, but not by GMP. This Haemophilus influenzae (strain PittGG) protein is Peptide chain release factor 3.